The chain runs to 308 residues: Bifunctional protein FolD (308 aa).

NADP(+) is bound by residues 171-173, S198, and I239; that span reads GRS.

The protein belongs to the tetrahydrofolate dehydrogenase/cyclohydrolase family. Homodimer.

The catalysed reaction is (6R)-5,10-methylene-5,6,7,8-tetrahydrofolate + NADP(+) = (6R)-5,10-methenyltetrahydrofolate + NADPH. The enzyme catalyses (6R)-5,10-methenyltetrahydrofolate + H2O = (6R)-10-formyltetrahydrofolate + H(+). It participates in one-carbon metabolism; tetrahydrofolate interconversion. Its function is as follows. Catalyzes the oxidation of 5,10-methylenetetrahydrofolate to 5,10-methenyltetrahydrofolate and then the hydrolysis of 5,10-methenyltetrahydrofolate to 10-formyltetrahydrofolate. This chain is Bifunctional protein FolD, found in Borreliella burgdorferi (strain ATCC 35210 / DSM 4680 / CIP 102532 / B31) (Borrelia burgdorferi).